A 141-amino-acid chain; its full sequence is Hydroperoxide reductase (141 aa).

It belongs to the OsmC/Ohr family. Homodimer.

The protein resides in the cytoplasm. Functionally, reduces organic and inorganic peroxide substrates. Protects the cell against oxidative stress. This is Hydroperoxide reductase from Mycoplasma pneumoniae (strain ATCC 29342 / M129 / Subtype 1) (Mycoplasmoides pneumoniae).